A 148-amino-acid chain; its full sequence is Arginine repressor (148 aa).

It belongs to the ArgR family.

Its subcellular location is the cytoplasm. The protein operates within amino-acid biosynthesis; L-arginine biosynthesis [regulation]. Functionally, regulates arginine biosynthesis genes. This is Arginine repressor from Prosthecochloris aestuarii (strain DSM 271 / SK 413).